A 207-amino-acid polypeptide reads, in one-letter code: Outer-membrane lipoprotein LolB (207 aa).

The first 21 residues, 1 to 21, serve as a signal peptide directing secretion; sequence MPTNTVRCLRLLPLASVLLAA. C22 carries the N-palmitoyl cysteine lipid modification. C22 carries the S-diacylglycerol cysteine lipid modification.

Belongs to the LolB family. Monomer.

Its subcellular location is the cell outer membrane. Its function is as follows. Plays a critical role in the incorporation of lipoproteins in the outer membrane after they are released by the LolA protein. The sequence is that of Outer-membrane lipoprotein LolB from Pectobacterium carotovorum subsp. carotovorum (strain PC1).